The chain runs to 2476 residues: MTAEPMSGNKLSTLVQKLHDFLAHSSEESEETCSSPRLVMNQSTDKICGSGLNSDMMENNKEEGASTSEKSRSSGSSRSKRKPSIVTKYVESDDEKPTDENVNEKAATENSENDITMQSLPKGTVIVQPEPVLNEDKDDFKGPEFRSRSKMKADNLKKRGEDGLHGIVSCTACGQQVNHFQKDSIYRHPSLKVLICKNCFKYYMSDDISRDSDGMDEQCRWCAEGGNLICCDFCHNAFCKKCILRNLGRKELSTIMDENNQWYCYICQPEPLLDLVTACNSVFENLEQLLQQNKKKIKVDSEKTSKVCDQTSKFSPKKSSSSCNGEEKKLEESCSGSVSSTYSHSALSVPKEMIKKTTKLIETTSNMNSSYIKFLKQAADNSEMTSAMKLCQLKSFKSVLDDIKKAHLALEEDLNSEIQALDDVHKEKNTKDLKSTDAKSETKLGKGEKSYSTEKREFLKLDARSSVKAIDGEEQRAHKSTSGEHKGSGRKDGSQYEPTNTPEDLDMDIVSVPSSVPEDIFDSLESAMEVQSSADYQGDGNSGTEPELESSSVKLNVSSKDSRGNIKSKVTAKVRKELFVKLTPVSLSNSPIKGVDCQEVSQEKNGRKSSGVARSSEKCRPREEISDHENNVTILLEDSDLRRSPRVKTTPLRRQTESNPAMSNSDEESNGTMKEKQKMSGPIRKKDKRNSADCATDNPKPHKVPKAKQPVIGDQNSDSDEMLAVLKEASQMGHSSSSDTDINEPQMNHKGKTGKDDNGKRKRKNSTSGSDFDTKKGKSTETSIISKKKRQNYSESSNYDSELEREIKTMSRIGAARKSVPEKKEEDSSEDEKQGKKVVDNGGHERAKTTQEGSSADDTGDTEGRQGGSCSIAGGSIEKVRSGVEFREMLCKPGVSSDGAEKPSVKEENVNSPEDKRVSKTKEKTKHLRSRQSRKGKGGSSDGTDRFPKKEQSDESSEGEKKQSRQRPGTKGKKAPDLKGETLKREQEWDSSSDGTERLPEEEEIGPFSKGIKQSKTDTAGGEKKGKKWKDKSCEKKEELSDSVDKLPGKGDSCDSSEDKKTRNRVSLREKKRFSLPAKSPGKRPECSSSDTEKSLKGQCCDSTEKRPKRIDLRERRNSSSKRNTKEVKSASSSSDAEGSSEDNKKQKKQRTSAKKKTGNTKEKKRNSLRATPKRKQVDITSSSSDIGDDDQNSAGEESSDEQKIKPVTENLVLPSHTGFCQSSGDEALSKSVPATVDDDDDDNDPENRIAKKMLLEEIKANLSSDEDGSSDDEPDGGGKKRIGKQSEESPADDGELRREQLAVNQVNSESDSDSEESKKPRYRHRLLRHKLTLSDGESGEEKPTKPKEHKEAKGRNRRKVSSEDSEDTDFQESGVSEEVSESEDEQRPRTRSAKKAELEENQRSYKQKKKRRRIKVQEDSSSENKSHSEEDKKEGDEEDEEDEDEDEEDENDDSKSPGKGRKKIRKILKDDKLRTETQNALKEEEERRKRIAEREREREKLREVIEIEDASPTKCPITTKLVLDENEETKEPLVQVHRNMVIKLKPHQVDGVQFMWDCCCESVEKTKKSPGSGCILAHCMGLGKTLQVVSFLHTVLLCDKLDFSTALVVCPLNTALNWMNEFEKWQEGLNDNEKLEVSELATVKRPQERSYMLQRWQEDGGVMIIGYEMYRNLAQGRNVKSRKLKDIFNKALVDPGPDFVVCDEGHILKNEASAVSKAMNSIKSRRRIILTGTPLQNNLIEYHCMVNFIKENLLGSIKEFRNRFINPIQNGQCADSTMVDVRVMKKRAHILYEMLAGCVQRKDYTALTKFLPPKHEYVLAVRMTAIQCKLYQYYLDHLTGVGNSTEGGRGKAGAKLFQDFQMLSRIWTHPWCLQLDYISKENKGYFDEDSMDEFIASDSDETSKSLSSDEKKKPKGKKGKKDSSSSGSGSDNDVEVIKVWNSRSRGGGDGNVDDTGNNPSVSLKLDESKTTSTSNPSSPAPDWYKDFVTDTDAEVLEHSGKMVLLFEILRMAEEIGDKVLVFSQSLISLDLIEDFLELASREKTEDKEKPLIYKGEGKWIRNIDYYRLDGSTNAQSRKKWAEEFNDETNVRGRLFIISTKAGSLGINLVAANRVIIFDASWNPSYDIQSIFRVYRFGQTKPVYVYRFLAQGTMEDKIYDRQVTKQSLSFRVVDQQQVERHFTMNELTELYTFEPDLLDDPNSEKKKKRDTPMLPKDTILAELLQIHKEHIVGYHEHDSLLDHKEEEELTEEERKAAWAEYEAEKKGLTMRFNIPTGTNLPPVTFTSQTPYIPFNLGALSAMSNQQLEDLINQGREKVVEATNSMTAVRIQPLEDIISTVWKENMNLSEAQVQALALSRQASQELDVKRREAIYNDVLTKQQMLINCVQRILMNRRLQQQYTQQQQQQLTYQQATLSHLMMPKPPNLIMTPSNYQQIDMRGMYQSVAGGMQPPPLQRAPPPTVRSKNPGPSPGKSM.

Lysine 10 is covalently cross-linked (Glycyl lysine isopeptide (Lys-Gly) (interchain with G-Cter in SUMO2)). The tract at residues 24–154 (HSSEESEETC…FRSRSKMKAD (131 aa)) is disordered. Phosphoserine occurs at positions 25 and 34. Over residues 40-57 (MNQSTDKICGSGLNSDMM) the composition is skewed to polar residues. Over residues 58–72 (ENNKEEGASTSEKSR) the composition is skewed to basic and acidic residues. Position 89 is a phosphotyrosine (tyrosine 89). The residue at position 92 (serine 92) is a Phosphoserine. A compositionally biased stretch (basic and acidic residues) spans 98-107 (TDENVNEKAA). Polar residues predominate over residues 108-121 (TENSENDITMQSLP). At serine 111 the chain carries Phosphoserine. Basic and acidic residues predominate over residues 134–154 (NEDKDDFKGPEFRSRSKMKAD). Residues lysine 137 and lysine 141 each participate in a glycyl lysine isopeptide (Lys-Gly) (interchain with G-Cter in SUMO2) cross-link. The ADD domain occupies 158-295 (KRGEDGLHGI…LEQLLQQNKK (138 aa)). A GATA-type; atypical zinc finger spans residues 169 to 205 (SCTACGQQVNHFQKDSIYRHPSLKVLICKNCFKYYMS). Position 212 is a phosphoserine (serine 212). A PHD-type; atypical zinc finger spans residues 216–271 (DEQCRWCAEGGNLICCDFCHNAFCKKCILRNLGRKELSTIMDENNQWYCYICQPEP). Lysine 298 is covalently cross-linked (Glycyl lysine isopeptide (Lys-Gly) (interchain with G-Cter in SUMO2)). Serine 315 is subject to Phosphoserine. 3 disordered regions span residues 427–451 (EKNT…EKSY), 466–507 (SVKA…DLDM), and 525–568 (ESAM…NIKS). Residue lysine 439 forms a Glycyl lysine isopeptide (Lys-Gly) (interchain with G-Cter in SUMO2) linkage. A compositionally biased stretch (basic and acidic residues) spans 466-494 (SVKAIDGEEQRAHKSTSGEHKGSGRKDGS). Residues 549–559 (ESSSVKLNVSS) are compositionally biased toward polar residues. Positions 573–586 (KVRKELFVKLTPVS) match the PxVxL motif motif. Phosphothreonine is present on threonine 583. Disordered regions lie at residues 585-877 (VSLS…GGSI) and 893-1464 (PGVS…GRKK). A phosphoserine mark is found at serine 586, serine 590, serine 626, serine 663, serine 665, serine 717, and serine 719. Positions 615 to 630 (SSEKCRPREEISDHEN) are enriched in basic and acidic residues. A compositionally biased stretch (polar residues) spans 732–746 (MGHSSSSDTDINEPQ). Phosphoserine occurs at positions 766, 801, 828, 829, 854, 855, and 871. Basic and acidic residues predominate over residues 819–849 (SVPEKKEEDSSEDEKQGKKVVDNGGHERAKT). Residues 899–922 (GAEKPSVKEENVNSPEDKRVSKTK) show a composition bias toward basic and acidic residues. A compositionally biased stretch (basic residues) spans 923–937 (EKTKHLRSRQSRKGK). Phosphoserine is present on residues serine 941 and serine 953. Positions 943 to 963 (GTDRFPKKEQSDESSEGEKKQ) are enriched in basic and acidic residues. Basic residues predominate over residues 964–973 (SRQRPGTKGK). Positions 974–988 (KAPDLKGETLKREQE) are enriched in basic and acidic residues. Lysine 984 is covalently cross-linked (Glycyl lysine isopeptide (Lys-Gly) (interchain with G-Cter in SUMO2)). Serine 991, serine 992, serine 993, and serine 1041 each carry phosphoserine. Over residues 1031–1061 (DKSCEKKEELSDSVDKLPGKGDSCDSSEDKK) the composition is skewed to basic and acidic residues. Residues 1062 to 1074 (TRNRVSLREKKRF) are compositionally biased toward basic residues. Arginine 1063 bears the Citrulline mark. Basic and acidic residues-rich tracts occupy residues 1083-1096 (KRPE…EKSL) and 1103-1129 (STEK…KEVK). Over residues 1146-1175 (KQKKQRTSAKKKTGNTKEKKRNSLRATPKR) the composition is skewed to basic residues. The segment at 1169–1313 (LRATPKRKQV…VNQVNSESDS (145 aa)) is interaction with DAXX. A phosphoserine mark is found at serine 1223, serine 1224, and serine 1232. Basic and acidic residues predominate over residues 1246–1260 (PENRIAKKMLLEEIK). A compositionally biased stretch (acidic residues) spans 1265–1276 (SDEDGSSDDEPD). Phosphoserine occurs at positions 1309, 1311, and 1313. Residues 1321 to 1332 (PRYRHRLLRHKL) show a composition bias toward basic residues. Residues serine 1335 and serine 1339 each carry the phosphoserine modification. Composition is skewed to basic and acidic residues over residues 1340 to 1355 (GEEK…EAKG) and 1395 to 1404 (KKAELEENQR). The segment covering 1406-1415 (YKQKKKRRRI) has biased composition (basic residues). A compositionally biased stretch (basic and acidic residues) spans 1416 to 1436 (KVQEDSSSENKSHSEEDKKEG). The segment covering 1437 to 1453 (DEEDEEDEDEDEEDEND) has biased composition (acidic residues). A Glycyl lysine isopeptide (Lys-Gly) (interchain with G-Cter in SUMO2) cross-link involves residue lysine 1473. Serine 1512 is subject to Phosphoserine. Phosphothreonine is present on threonine 1514. The Helicase ATP-binding domain maps to 1566–1753 (KTKKSPGSGC…HCMVNFIKEN (188 aa)). 1579–1586 (HCMGLGKT) contributes to the ATP binding site. Positions 1704 to 1707 (DEGH) match the DEGH box motif. Phosphoserine occurs at positions 1891 and 1898. A disordered region spans residues 1898-1982 (SDSDETSKSL…STSNPSSPAP (85 aa)). Residues 1902–1913 (ETSKSLSSDEKK) show a composition bias toward basic and acidic residues. Residue lysine 1965 forms a Glycyl lysine isopeptide (Lys-Gly) (interchain with G-Cter in SUMO1); alternate linkage. Residue lysine 1965 forms a Glycyl lysine isopeptide (Lys-Gly) (interchain with G-Cter in SUMO2); alternate linkage. A Glycyl lysine isopeptide (Lys-Gly) (interchain with G-Cter in SUMO2) cross-link involves residue lysine 1970. A compositionally biased stretch (low complexity) spans 1971–1982 (TTSTSNPSSPAP). Phosphoserine is present on residues serine 1975 and serine 1979. The tract at residues 1993–2263 (DAEVLEHSGK…RKAAWAEYEA (271 aa)) is interaction with MECP2. Residues 2008 to 2188 (EILRMAEEIG…ERHFTMNELT (181 aa)) enclose the Helicase C-terminal domain. The residue at position 2203 (serine 2203) is a Phosphoserine. The tract at residues 2445–2476 (SVAGGMQPPPLQRAPPPTVRSKNPGPSPGKSM) is disordered. Pro residues predominate over residues 2451–2462 (QPPPLQRAPPPT). 2 positions are modified to omega-N-methylarginine: arginine 2457 and arginine 2464.

The protein belongs to the SNF2/RAD54 helicase family. Interacts with DAXX to form the chromatin remodeling complex ATRX:DAXX. Probably binds EZH2. Binds annexin V in a calcium and phosphatidylcholine/phosphatidylserine-dependent manner. Interacts directly with CBX5 via the PxVxL motif. Interacts with RAD50, MRE11 and NBN; indicative for an association with the MRN complex. Interacts with histone MACROH2A1. Interacts with histone H3 peptides methylated at 'Lys-10' with preferences H3K9me3 &gt; H3K9me2 &gt; H3K9me1. Interacts with histone H3 peptides unmethylated at 'Lys-5' (H3K4me0). Interacts with MECP2, SMC1 and SMC3. Interacts with SETDB1, TRIM28 and ZNF274. Post-translationally, citrullinated by PADI4.

It is found in the nucleus. The protein localises to the chromosome. The protein resides in the telomere. It localises to the PML body. It carries out the reaction ATP + H2O = ADP + phosphate + H(+). In terms of biological role, involved in transcriptional regulation and chromatin remodeling. Facilitates DNA replication in multiple cellular environments and is required for efficient replication of a subset of genomic loci. Binds to DNA tandem repeat sequences in both telomeres and euchromatin and in vitro binds DNA quadruplex structures. May help stabilizing G-rich regions into regular chromatin structures by remodeling G4 DNA and incorporating H3.3-containing nucleosomes. Catalytic component of the chromatin remodeling complex ATRX:DAXX which has ATP-dependent DNA translocase activity and catalyzes the replication-independent deposition of histone H3.3 in pericentric DNA repeats outside S-phase and telomeres, and the in vitro remodeling of H3.3-containing nucleosomes. Its heterochromatin targeting is proposed to involve a combinatorial readout of histone H3 modifications (specifically methylation states of H3K9 and H3K4) and association with CBX5. Involved in maintaining telomere structural integrity in embryonic stem cells probably implying recruitment of CBX5 to telomeres. Reports on the involvement in transcriptional regulation of telomeric repeat-containing RNA (TERRA) are conflicting; according is required for its transcriptional repression in embryonic stem cells. Acts as a negative regulator of chromatin incorporation of transcriptionally repressive histone MACROH2A1, particularily at telomeres. Participates in the allele-specific gene expression at the imprinted IGF2/H19 gene locus. On the maternal allele, required for the chromatin occupancy of SMC1 and CTCTF within the H19 imprinting control region (ICR) and involved in esatblishment of histone tails modifications in the ICR. Binds to zinc-finger coding genes with atypical chromatin signatures and regulates its H3K9me3 levels. Forms a complex with ZNF274, TRIM28 and SETDB1 to facilitate the deposition and maintenance of H3K9me3 at the 3' exons of zinc-finger genes. In Mus musculus (Mouse), this protein is Transcriptional regulator ATRX (Atrx).